The sequence spans 318 residues: Myoblast determination protein 1 (318 aa).

Met-1 is covalently cross-linked (Peptide (Met-Gly) (interchain with G-Cter in ubiquitin)). Lys-104 is subject to N6-methyllysine; by EHMT2. In terms of domain architecture, bHLH spans 109 to 160 (DRRKAATMRERRRLSKVNEAFETLKRCTSSNPNQRLPKVEILRNAIRYIEGL). 2 disordered regions span residues 175–225 (AAFY…QNGY) and 265–318 (APAL…YQVL). Residues 196 to 206 (SDASSPRSNCS) show a composition bias toward polar residues. Residues 265 to 274 (APALLLADAP) show a composition bias toward low complexity. Composition is skewed to polar residues over residues 287-298 (LSDTEQGTQTPS) and 307-318 (AGSNPNAIYQVL).

Interacts with SUV39H1. Efficient DNA binding requires dimerization with another bHLH protein. Seems to form active heterodimers with ITF-2. Interacts with DDX5. Interacts with CHD2. Interacts with TSC22D3 isoform 1 and isoform 4. Interacts with SETD3. Interacts with P-TEFB complex; promotes the transcriptional activity of MYOD1 through its CDK9-mediated phosphorylation. Interacts with CSRP3. Interacts with NUPR1. Acetylated by a complex containing EP300 and PCAF. The acetylation is essential to activate target genes. Conversely, its deacetylation by SIRT1 inhibits its function. Post-translationally, ubiquitinated on the N-terminus; which is required for proteasomal degradation. In terms of processing, phosphorylated by CDK9. This phosphorylation promotes its function in muscle differentiation. Methylation at Lys-104 by EHMT2/G9a inhibits myogenic activity.

Its subcellular location is the nucleus. In terms of biological role, acts as a transcriptional activator that promotes transcription of muscle-specific target genes and plays a role in muscle differentiation. Together with MYF5 and MYOG, co-occupies muscle-specific gene promoter core region during myogenesis. Induces fibroblasts to differentiate into myoblasts. Interacts with and is inhibited by the twist protein. This interaction probably involves the basic domains of both proteins. In Mus musculus (Mouse), this protein is Myoblast determination protein 1 (Myod1).